The following is an 88-amino-acid chain: Defensin-like protein 24 (88 aa).

Residues 1-23 (MASSKFVLFAILALSLLLSGTEA) form the signal peptide. 4 disulfide bridges follow: Cys-37–Cys-87, Cys-47–Cys-72, Cys-56–Cys-83, and Cys-60–Cys-85.

It belongs to the DEFL family.

It localises to the secreted. This is Defensin-like protein 24 from Arabidopsis thaliana (Mouse-ear cress).